The sequence spans 199 residues: Pyridoxal 5'-phosphate synthase subunit PdxT (199 aa).

47–49 (GES) provides a ligand contact to L-glutamine. The Nucleophile role is filled by cysteine 79. L-glutamine-binding positions include arginine 106 and 133–134 (IR). Residues histidine 169 and glutamate 171 each act as charge relay system in the active site.

The protein belongs to the glutaminase PdxT/SNO family. In the presence of PdxS, forms a dodecamer of heterodimers. Only shows activity in the heterodimer.

The catalysed reaction is aldehydo-D-ribose 5-phosphate + D-glyceraldehyde 3-phosphate + L-glutamine = pyridoxal 5'-phosphate + L-glutamate + phosphate + 3 H2O + H(+). The enzyme catalyses L-glutamine + H2O = L-glutamate + NH4(+). The protein operates within cofactor biosynthesis; pyridoxal 5'-phosphate biosynthesis. In terms of biological role, catalyzes the hydrolysis of glutamine to glutamate and ammonia as part of the biosynthesis of pyridoxal 5'-phosphate. The resulting ammonia molecule is channeled to the active site of PdxS. In Desulfitobacterium hafniense (strain Y51), this protein is Pyridoxal 5'-phosphate synthase subunit PdxT.